The chain runs to 209 residues: V-type ATP synthase subunit D (209 aa).

The protein belongs to the V-ATPase D subunit family.

Produces ATP from ADP in the presence of a proton gradient across the membrane. This is V-type ATP synthase subunit D from Anaeromyxobacter sp. (strain K).